A 279-amino-acid polypeptide reads, in one-letter code: Toxin TxP-I (279 aa).

The N-terminal stretch at 1–14 (MNLFFLFIIPTILA) is a signal peptide. Residues 15–27 (VKPFRSFNNISLI) constitute a propeptide that is removed on maturation.

In terms of processing, contains several disulfide bonds. Posterior glands which appear to be connected with the stylet through a series of ducts.

Its subcellular location is the secreted. In terms of biological role, part of a complex mixture of neurotoxins which P.tritici utilizes to capture prey. It has contracting-paralyzing activity in insects. The protein is Toxin TxP-I of Pyemotes tritici (Straw itch mite).